Here is a 444-residue protein sequence, read N- to C-terminus: Transposase for insertion sequence element IS1557 (444 aa).

The disordered stretch occupies residues 273 to 292 (PKWGRGRPGKNAAPRPGRER).

This sequence belongs to the transposase 12 family.

In Mycobacterium tuberculosis (strain CDC 1551 / Oshkosh), this protein is Transposase for insertion sequence element IS1557.